Consider the following 440-residue polypeptide: MFLAQEIIRKKRDGQALSDEEIRFFINGIRDNTISEGQIAALAMTIFFHDMSMPERVSLTMAMRDSGTVLDWKSLNLNGPIVDKHSTGGVGDVTSLMLGPMVAACGGYVPMISGRGLGHTGGTLDKLEAIPGFDIFPDDNRFREIIKDVGVAIIGQTSSLAPADKRFYATRDITATVDSIPLITASILAKKLAEGLDALVMDVKVGSGAFMPTYELSAALAEAIVGVANGAGVRTTALLTDMNQVLASSAGNAVEVREAVQFLTGEYRNPRLFDVTMALCVEMLISGKLAADDAEARAKLQAVLDNGKAAEVFGRMVAAQKGPSDFVENYANYLPTAMLSKAVYADTEGFISAMDTRALGMAVVSMGGGRRQASDTIDYSVGFTEMARLGDRVDGQRPLAVIHAKDENSWQEAAKAVKAAIKLDDKAPEITPTVYRRITE.

This sequence belongs to the thymidine/pyrimidine-nucleoside phosphorylase family. As to quaternary structure, homodimer.

The enzyme catalyses thymidine + phosphate = 2-deoxy-alpha-D-ribose 1-phosphate + thymine. The protein operates within pyrimidine metabolism; dTMP biosynthesis via salvage pathway; dTMP from thymine: step 1/2. Functionally, the enzymes which catalyze the reversible phosphorolysis of pyrimidine nucleosides are involved in the degradation of these compounds and in their utilization as carbon and energy sources, or in the rescue of pyrimidine bases for nucleotide synthesis. In Klebsiella pneumoniae subsp. pneumoniae (strain ATCC 700721 / MGH 78578), this protein is Thymidine phosphorylase.